We begin with the raw amino-acid sequence, 266 residues long: Putative carbamate hydrolase RutD (266 aa).

Belongs to the AB hydrolase superfamily. Hydrolase RutD family.

It carries out the reaction carbamate + 2 H(+) = NH4(+) + CO2. In terms of biological role, involved in pyrimidine catabolism. May facilitate the hydrolysis of carbamate, a reaction that can also occur spontaneously. The protein is Putative carbamate hydrolase RutD of Escherichia coli O103:H2 (strain 12009 / EHEC).